A 302-amino-acid chain; its full sequence is Glutamate/aspartate import solute-binding protein (302 aa).

A signal peptide spans 1 to 22 (MQLRKLTTAMLVMGLSAGLAHA).

It belongs to the bacterial solute-binding protein 3 family. In terms of assembly, the complex is composed of two ATP-binding proteins (GltL), two transmembrane proteins (GltJ and GltK) and a solute-binding protein (GltI).

The protein localises to the periplasm. In terms of biological role, part of the ABC transporter complex GltIJKL involved in glutamate and aspartate uptake. Binds to both glutamate and aspartate. The polypeptide is Glutamate/aspartate import solute-binding protein (gltI) (Salmonella typhimurium (strain LT2 / SGSC1412 / ATCC 700720)).